The sequence spans 57 residues: Large ribosomal subunit protein bL32 (57 aa).

This sequence belongs to the bacterial ribosomal protein bL32 family.

The chain is Large ribosomal subunit protein bL32 from Staphylococcus haemolyticus (strain JCSC1435).